Reading from the N-terminus, the 188-residue chain is Elongation factor P (188 aa).

It belongs to the elongation factor P family.

The protein resides in the cytoplasm. It participates in protein biosynthesis; polypeptide chain elongation. Its function is as follows. Involved in peptide bond synthesis. Stimulates efficient translation and peptide-bond synthesis on native or reconstituted 70S ribosomes in vitro. Probably functions indirectly by altering the affinity of the ribosome for aminoacyl-tRNA, thus increasing their reactivity as acceptors for peptidyl transferase. The protein is Elongation factor P of Rickettsia rickettsii (strain Iowa).